The primary structure comprises 154 residues: Putative pre-16S rRNA nuclease (154 aa).

Belongs to the YqgF nuclease family.

Its subcellular location is the cytoplasm. Functionally, could be a nuclease involved in processing of the 5'-end of pre-16S rRNA. This is Putative pre-16S rRNA nuclease from Rickettsia bellii (strain OSU 85-389).